The following is a 430-amino-acid chain: V-type ATP synthase beta chain 1 (430 aa).

The protein belongs to the ATPase alpha/beta chains family.

Produces ATP from ADP in the presence of a proton gradient across the membrane. The V-type beta chain is a regulatory subunit. The sequence is that of V-type ATP synthase beta chain 1 (atpB1) from Treponema pallidum (strain Nichols).